Reading from the N-terminus, the 458-residue chain is Transcription factor bHLH10 (458 aa).

The disordered stretch occupies residues methionine 1–asparagine 49. A bHLH domain is found at serine 243–leucine 292. Residues lysine 315–lysine 338 form a disordered region. Over residues glycine 324–threonine 334 the composition is skewed to acidic residues.

In terms of assembly, homodimer.

It localises to the nucleus. This chain is Transcription factor bHLH10 (BHLH10), found in Arabidopsis thaliana (Mouse-ear cress).